An 84-amino-acid polypeptide reads, in one-letter code: MAYLKIVLVALMLVLGVSAMRLSDQEDQDVSVVKRAACKCDDDGPDIRSATLTGTVDFWNCNEGWEKCTAVYTAVASCCRKKKG.

Residues 1–19 (MAYLKIVLVALMLVLGVSA) form the signal peptide. The propeptide occupies 20–33 (MRLSDQEDQDVSVV). 3 disulfides stabilise this stretch: C38/C78, C40/C68, and C61/C79. The residue at position 83 (K83) is a Lysine amide.

It belongs to the sea anemone sodium channel inhibitory toxin family. Type II subfamily.

The protein resides in the secreted. It localises to the nematocyst. Its function is as follows. Binds specifically to voltage-gated sodium channels (Nav), thereby delaying their inactivation during signal transduction. In Stichodactyla haddoni (Saddle carpet anemone), this protein is Delta-stichotoxin-Shd3a.